Reading from the N-terminus, the 305-residue chain is tRNA pseudouridine synthase B (305 aa).

Asp-38 serves as the catalytic Nucleophile.

The protein belongs to the pseudouridine synthase TruB family. Type 1 subfamily.

It carries out the reaction uridine(55) in tRNA = pseudouridine(55) in tRNA. Responsible for synthesis of pseudouridine from uracil-55 in the psi GC loop of transfer RNAs. This Latilactobacillus sakei subsp. sakei (strain 23K) (Lactobacillus sakei subsp. sakei) protein is tRNA pseudouridine synthase B.